We begin with the raw amino-acid sequence, 788 residues long: Calpastatin (788 aa).

Positions 1 to 11 (MSQPGPKPAAS) are enriched in pro residues. Disordered stretches follow at residues 1–262 (MSQP…TGPV), 289–493 (LLEK…MCSI), and 514–580 (TLAG…SQEQ). Phosphoserine is present on serine 11. The segment covering 12–21 (PRPSRGAAAR) has biased composition (low complexity). Residues 38–49 (PGEKKGSDEKKA) show a composition bias toward basic and acidic residues. Over residues 65–87 (AATATKVTASSAATSKSPSMSTT) the composition is skewed to low complexity. Residues 99-119 (EGPDQKRPREQAVKTESKKPQ) are compositionally biased toward basic and acidic residues. Lysine 112 is covalently cross-linked (Glycyl lysine isopeptide (Lys-Gly) (interchain with G-Cter in SUMO2)). Lysine 129 carries the N6-acetyllysine modification. Serine 165 is modified (phosphoserine). Threonine 216 carries the post-translational modification Phosphothreonine. Serine 219 carries the phosphoserine modification. Over residues 246 to 256 (GGHEDTNRDDP) the composition is skewed to basic and acidic residues. The stretch at 251 to 303 (TNRDDPPYTGPVVLDPMYSTYLEALGIKEGTIPPEYRKLLEKNEGITQPLPDS) is one Inhibitory domain 1 repeat. Residues serine 303 and serine 324 each carry the phosphoserine modification. Composition is skewed to polar residues over residues 318 to 328 (SDFTCSSPTGK) and 369 to 380 (QALQALSDSLGT). Residues 384–436 (DPPSHVSQAEQVKEAKAKEERQEKCGEDEDTVPAEYRLKPAKDKDGKPLLPEP) form an Inhibitory domain 2 repeat. 2 stretches are compositionally biased toward basic and acidic residues: residues 394 to 408 (QVKEAKAKEERQEKC) and 419 to 430 (YRLKPAKDKDGK). The span at 441 to 453 (KSLSESELIGELS) shows a compositional bias: low complexity. Phosphoserine occurs at positions 444, 446, and 453. Phosphothreonine is present on threonine 479. The residue at position 518 (serine 518) is a Phosphoserine. Residues 522-570 (READPEHEKTVEDKVKEKAKEEEHEKLGEKEETVPPDYRLEEVKDKDGK) show a composition bias toward basic and acidic residues. Residues 524–577 (ADPEHEKTVEDKVKEKAKEEEHEKLGEKEETVPPDYRLEEVKDKDGKPLLPKES) form an Inhibitory domain 3 repeat. Phosphoserine occurs at positions 594, 605, 653, and 655. The segment at 620–788 (VVSQTPAPST…PKAKEDARHS (169 aa)) is disordered. Residues 661–714 (PDPDENKPLDDKVKEKIKPEHSEKLGERDDTIPPEYRHLLDNDGKDKPEKPPTK) form an Inhibitory domain 4 repeat. Composition is skewed to basic and acidic residues over residues 661–726 (PDPD…RDPI) and 759–788 (ASKDGEKTKDSSKKTEEVSKPKAKEDARHS).

It belongs to the protease inhibitor I27 (calpastatin) family. As to expression, isoform 2 is the major form in all tissues examined. Isoform 1 accounts for 5-10% in tissues such as skeletal muscle, liver and brain, and 30% in myoblasts. Isoforms 4 and 5 are testis-specific. Isoform 6 is highly expressed in heart and skeletal muscle with lower levels in liver, brain and testis. Isoform 7 is expressed at high levels in liver.

In terms of biological role, specific inhibition of calpain (calcium-dependent cysteine protease). Plays a key role in postmortem tenderization of meat and have been proposed to be involved in muscle protein degradation in living tissue. This is Calpastatin (Cast) from Mus musculus (Mouse).